The chain runs to 849 residues: Putative endoplasmic reticulum mannosidase MNL2 (849 aa).

Residues 1 to 12 (MSIARLVYSLFR) lie on the Cytoplasmic side of the membrane. The chain crosses the membrane as a helical; Signal-anchor for type II membrane protein span at residues 13-32 (RVRSVLLLFITISLLFYYTF). Residues 33–849 (QNEIDILNSY…TQGGHIIKKK (817 aa)) lie on the Lumenal side of the membrane. A glycan (N-linked (GlcNAc...) asparagine) is linked at Asn45. Residues 56–79 (HNTEGSSKLDPPDLSSTGSDRIAT) form a disordered region. A disulfide bridge links Cys559 with Cys598.

It belongs to the glycosyl hydrolase 47 family. It depends on Ca(2+) as a cofactor.

It localises to the endoplasmic reticulum membrane. It functions in the pathway protein modification; protein glycosylation. Putative mannosidase involved in glycoprotein quality control since it is involved in the targeting of misfolded glycoproteins for ER-associated protein degradation (ERAD). The sequence is that of Putative endoplasmic reticulum mannosidase MNL2 (MNL2) from Saccharomyces cerevisiae (strain ATCC 204508 / S288c) (Baker's yeast).